A 256-amino-acid polypeptide reads, in one-letter code: Hemin import ATP-binding protein HmuV (256 aa).

The region spanning 2 to 238 (ISAQNLVYSL…QALTMLYGAD (237 aa)) is the ABC transporter domain. An ATP-binding site is contributed by 34 to 41 (GPNGAGKS).

It belongs to the ABC transporter superfamily. Heme (hemin) importer (TC 3.A.1.14.5) family. The complex is composed of two ATP-binding proteins (HmuV), two transmembrane proteins (HmuU) and a solute-binding protein (HmuT).

The protein resides in the cell inner membrane. Functionally, part of the ABC transporter complex HmuTUV involved in hemin import. Responsible for energy coupling to the transport system. The protein is Hemin import ATP-binding protein HmuV of Escherichia coli O157:H7.